Here is a 101-residue protein sequence, read N- to C-terminus: Small ribosomal subunit protein bS18c (101 aa).

It belongs to the bacterial ribosomal protein bS18 family. In terms of assembly, part of the 30S ribosomal subunit.

The protein localises to the plastid. It is found in the chloroplast. This is Small ribosomal subunit protein bS18c from Aethionema cordifolium (Lebanon stonecress).